Here is a 203-residue protein sequence, read N- to C-terminus: ER membrane protein complex subunit 8/9 homolog (203 aa).

The region spanning 4 to 140 (YKVSERAYAK…IQVFNCPGDS (137 aa)) is the MPN domain.

This sequence belongs to the EMC8/EMC9 family. In terms of assembly, component of the ER membrane protein complex (EMC).

Its subcellular location is the endoplasmic reticulum membrane. In terms of biological role, part of the endoplasmic reticulum membrane protein complex (EMC) that enables the energy-independent insertion into endoplasmic reticulum membranes of newly synthesized multi-pass membrane proteins like rhodopsins. In Drosophila melanogaster (Fruit fly), this protein is ER membrane protein complex subunit 8/9 homolog.